We begin with the raw amino-acid sequence, 431 residues long: Protein translocase subunit SecY (431 aa).

Transmembrane regions (helical) follow at residues 18–38, 64–84, 116–136, 146–166, 175–195, 214–234, 262–282, 309–329, 369–389, and 390–410; these read IIFT…PVPH, LFNF…SIII, FTIV…NNMA, VGTY…LMWL, VGNG…PQTI, IIKV…VIFI, LPLK…AFIT, PVGM…YAFV, FVGS…VNIA, and GLPS…GVAL.

It belongs to the SecY/SEC61-alpha family. In terms of assembly, component of the Sec protein translocase complex. Heterotrimer consisting of SecY, SecE and SecG subunits. The heterotrimers can form oligomers, although 1 heterotrimer is thought to be able to translocate proteins. Interacts with the ribosome. Interacts with SecDF, and other proteins may be involved. Interacts with SecA.

The protein localises to the cell membrane. Its function is as follows. The central subunit of the protein translocation channel SecYEG. Consists of two halves formed by TMs 1-5 and 6-10. These two domains form a lateral gate at the front which open onto the bilayer between TMs 2 and 7, and are clamped together by SecE at the back. The channel is closed by both a pore ring composed of hydrophobic SecY resides and a short helix (helix 2A) on the extracellular side of the membrane which forms a plug. The plug probably moves laterally to allow the channel to open. The ring and the pore may move independently. This is Protein translocase subunit SecY from Bacillus licheniformis (strain ATCC 14580 / DSM 13 / JCM 2505 / CCUG 7422 / NBRC 12200 / NCIMB 9375 / NCTC 10341 / NRRL NRS-1264 / Gibson 46).